The sequence spans 209 residues: Kynurenine formamidase (209 aa).

W18 is a substrate binding site. Zn(2+) is bound by residues H48, H52, and D54. H58 acts as the Proton donor/acceptor in catalysis. 2 residues coordinate Zn(2+): H160 and E172.

Belongs to the Cyclase 1 superfamily. KynB family. Homodimer. Zn(2+) is required as a cofactor.

The enzyme catalyses N-formyl-L-kynurenine + H2O = L-kynurenine + formate + H(+). It participates in amino-acid degradation; L-tryptophan degradation via kynurenine pathway; L-kynurenine from L-tryptophan: step 2/2. In terms of biological role, catalyzes the hydrolysis of N-formyl-L-kynurenine to L-kynurenine, the second step in the kynurenine pathway of tryptophan degradation. The polypeptide is Kynurenine formamidase (Paraburkholderia phymatum (strain DSM 17167 / CIP 108236 / LMG 21445 / STM815) (Burkholderia phymatum)).